A 946-amino-acid polypeptide reads, in one-letter code: Protein translocase subunit SecA (946 aa).

ATP-binding positions include Q90, 108–112 (GEGKT), and D509.

The protein belongs to the SecA family. Monomer and homodimer. Part of the essential Sec protein translocation apparatus which comprises SecA, SecYEG and auxiliary proteins SecDF. Other proteins may also be involved.

The protein localises to the cell inner membrane. The protein resides in the cellular thylakoid membrane. It is found in the cytoplasm. The catalysed reaction is ATP + H2O + cellular proteinSide 1 = ADP + phosphate + cellular proteinSide 2.. In terms of biological role, part of the Sec protein translocase complex. Interacts with the SecYEG preprotein conducting channel. Has a central role in coupling the hydrolysis of ATP to the transfer of proteins into and across the cell membrane, serving as an ATP-driven molecular motor driving the stepwise translocation of polypeptide chains across the membrane. Functionally, probably participates in protein translocation into and across both the cytoplasmic and thylakoid membranes in cyanobacterial cells. This chain is Protein translocase subunit SecA, found in Synechococcus sp. (strain RCC307).